Reading from the N-terminus, the 413-residue chain is Elongation factor 1-alpha (413 aa).

The region spanning 5 to 211 (KEHINLAFIG…DNLAAPEKPV (207 aa)) is the tr-type G domain. The tract at residues 14–21 (GHVDHGKS) is G1. 14–21 (GHVDHGKS) is a binding site for GTP. S21 contacts Mg(2+). Positions 60–64 (GVTID) are G2. Residues 81–84 (DCPG) are G3. GTP-binding positions include 81 to 85 (DCPGH) and 136 to 139 (NKID). The segment at 136-139 (NKID) is G4. The G5 stretch occupies residues 175-177 (SAF).

This sequence belongs to the TRAFAC class translation factor GTPase superfamily. Classic translation factor GTPase family. EF-Tu/EF-1A subfamily.

Its subcellular location is the cytoplasm. It catalyses the reaction GTP + H2O = GDP + phosphate + H(+). Functionally, GTP hydrolase that promotes the GTP-dependent binding of aminoacyl-tRNA to the A-site of ribosomes during protein biosynthesis. This is Elongation factor 1-alpha from Methanobrevibacter smithii (strain ATCC 35061 / DSM 861 / OCM 144 / PS).